Consider the following 548-residue polypeptide: Glucose-6-phosphate isomerase (548 aa).

The active-site Proton donor is the Glu359. Active-site residues include His390 and Lys510.

The protein belongs to the GPI family.

It localises to the cytoplasm. It catalyses the reaction alpha-D-glucose 6-phosphate = beta-D-fructose 6-phosphate. It functions in the pathway carbohydrate biosynthesis; gluconeogenesis. The protein operates within carbohydrate degradation; glycolysis; D-glyceraldehyde 3-phosphate and glycerone phosphate from D-glucose: step 2/4. Functionally, catalyzes the reversible isomerization of glucose-6-phosphate to fructose-6-phosphate. This Gloeobacter violaceus (strain ATCC 29082 / PCC 7421) protein is Glucose-6-phosphate isomerase.